Consider the following 218-residue polypeptide: Phosphatidylserine decarboxylase proenzyme (218 aa).

The active-site Schiff-base intermediate with substrate; via pyruvic acid is S182. Residue S182 is modified to Pyruvic acid (Ser); by autocatalysis.

The protein belongs to the phosphatidylserine decarboxylase family. PSD-A subfamily. As to quaternary structure, heterodimer of a large membrane-associated beta subunit and a small pyruvoyl-containing alpha subunit. The cofactor is pyruvate. In terms of processing, is synthesized initially as an inactive proenzyme. Formation of the active enzyme involves a self-maturation process in which the active site pyruvoyl group is generated from an internal serine residue via an autocatalytic post-translational modification. Two non-identical subunits are generated from the proenzyme in this reaction, and the pyruvate is formed at the N-terminus of the alpha chain, which is derived from the carboxyl end of the proenzyme. The post-translation cleavage follows an unusual pathway, termed non-hydrolytic serinolysis, in which the side chain hydroxyl group of the serine supplies its oxygen atom to form the C-terminus of the beta chain, while the remainder of the serine residue undergoes an oxidative deamination to produce ammonia and the pyruvoyl prosthetic group on the alpha chain.

The protein localises to the cell membrane. It catalyses the reaction a 1,2-diacyl-sn-glycero-3-phospho-L-serine + H(+) = a 1,2-diacyl-sn-glycero-3-phosphoethanolamine + CO2. It participates in phospholipid metabolism; phosphatidylethanolamine biosynthesis; phosphatidylethanolamine from CDP-diacylglycerol: step 2/2. Its function is as follows. Catalyzes the formation of phosphatidylethanolamine (PtdEtn) from phosphatidylserine (PtdSer). The sequence is that of Phosphatidylserine decarboxylase proenzyme from Oleidesulfovibrio alaskensis (strain ATCC BAA-1058 / DSM 17464 / G20) (Desulfovibrio alaskensis).